The chain runs to 172 residues: Adenylate kinase isoenzyme 6 (172 aa).

Positions 13, 15, 16, 17, and 18 each coordinate ATP. Residues 33-56 (NVGDLAREGQLYDGYDEEYDCPIL) form an NMPbind region. An LID region spans residues 108–118 (NRGYNEKKLKD). The ATP site is built by arginine 109 and lysine 148.

The protein belongs to the adenylate kinase family. AK6 subfamily. Monomer and homodimer. Interacts with small ribosomal subunit protein uS11. Not a structural component of 43S pre-ribosomes, but transiently interacts with them by binding to uS11. Interacts with COIL (via C-terminus).

It localises to the cytoplasm. The protein resides in the nucleus. Its subcellular location is the nucleoplasm. It is found in the cajal body. The enzyme catalyses AMP + ATP = 2 ADP. It catalyses the reaction ATP + H2O = ADP + phosphate + H(+). In terms of biological role, broad-specificity nucleoside monophosphate (NMP) kinase that catalyzes the reversible transfer of the terminal phosphate group between nucleoside triphosphates and monophosphates. Also has ATPase activity. Involved in the late cytoplasmic maturation steps of the 40S ribosomal particles, specifically 18S rRNA maturation. While NMP activity is not required for ribosome maturation, ATPase activity is. Associates transiently with small ribosomal subunit protein uS11. ATP hydrolysis breaks the interaction with uS11. May temporarily remove uS11 from the ribosome to enable a conformational change of the ribosomal RNA that is needed for the final maturation step of the small ribosomal subunit. Its NMP activity may have a role in nuclear energy homeostasis. May be involved in regulation of Cajal body (CB) formation. The polypeptide is Adenylate kinase isoenzyme 6 (Bos taurus (Bovine)).